Consider the following 610-residue polypeptide: Aspartate--tRNA(Asp/Asn) ligase (610 aa).

Residue E182 coordinates L-aspartate. Residues 206–209 are aspartate; the sequence is QLFK. R228 contacts L-aspartate. ATP contacts are provided by residues 228 to 230 and Q237; that span reads RDE. H470 provides a ligand contact to L-aspartate. ATP is bound at residue E506. An L-aspartate-binding site is contributed by R513. 558–561 is a binding site for ATP; sequence GLDR.

It belongs to the class-II aminoacyl-tRNA synthetase family. Type 1 subfamily. Homodimer.

The protein localises to the cytoplasm. It catalyses the reaction tRNA(Asx) + L-aspartate + ATP = L-aspartyl-tRNA(Asx) + AMP + diphosphate. Aspartyl-tRNA synthetase with relaxed tRNA specificity since it is able to aspartylate not only its cognate tRNA(Asp) but also tRNA(Asn). Reaction proceeds in two steps: L-aspartate is first activated by ATP to form Asp-AMP and then transferred to the acceptor end of tRNA(Asp/Asn). In Acidobacterium capsulatum (strain ATCC 51196 / DSM 11244 / BCRC 80197 / JCM 7670 / NBRC 15755 / NCIMB 13165 / 161), this protein is Aspartate--tRNA(Asp/Asn) ligase.